Reading from the N-terminus, the 230-residue chain is Protein FAM3A (230 aa).

Positions 1–33 (MRLAGPLRIVALIIIMGLTWILVTILLGGPGVG) are cleaved as a signal peptide. Intrachain disulfides connect cysteine 59–cysteine 87 and cysteine 65–cysteine 222. The 159-residue stretch at 68 to 226 (EHLSFRIVSG…LEMEGCIPRR (159 aa)) folds into the GG-type lectin domain.

This sequence belongs to the FAM3 family.

The protein resides in the secreted. In Mus musculus (Mouse), this protein is Protein FAM3A (Fam3a).